Reading from the N-terminus, the 241-residue chain is Uridylate kinase (241 aa).

14 to 17 lines the ATP pocket; sequence KLSG. The tract at residues 22 to 27 is involved in allosteric activation by GTP; the sequence is GGLGMG. Position 56 (Gly-56) interacts with UMP. 2 residues coordinate ATP: Gly-57 and Arg-61. UMP contacts are provided by residues Asp-77 and 138–145; that span reads TGNPFFTT. ATP is bound by residues Thr-165, Tyr-171, and Asp-174.

The protein belongs to the UMP kinase family. In terms of assembly, homohexamer.

The protein localises to the cytoplasm. It carries out the reaction UMP + ATP = UDP + ADP. Its pathway is pyrimidine metabolism; CTP biosynthesis via de novo pathway; UDP from UMP (UMPK route): step 1/1. Allosterically activated by GTP. Inhibited by UTP. In terms of biological role, catalyzes the reversible phosphorylation of UMP to UDP. The polypeptide is Uridylate kinase (Psychrobacter sp. (strain PRwf-1)).